The following is a 124-amino-acid chain: S-adenosylmethionine decarboxylase proenzyme (124 aa).

Residue Ser-63 is the Schiff-base intermediate with substrate; via pyruvic acid of the active site. The residue at position 63 (Ser-63) is a Pyruvic acid (Ser); by autocatalysis. His-68 acts as the Proton acceptor; for processing activity in catalysis. Catalysis depends on Cys-83, which acts as the Proton donor; for catalytic activity.

It belongs to the prokaryotic AdoMetDC family. Type 1 subfamily. As to quaternary structure, heterotetramer of two alpha and two beta chains arranged as a dimer of alpha/beta heterodimers. It depends on pyruvate as a cofactor. Is synthesized initially as an inactive proenzyme. Formation of the active enzyme involves a self-maturation process in which the active site pyruvoyl group is generated from an internal serine residue via an autocatalytic post-translational modification. Two non-identical subunits are generated from the proenzyme in this reaction, and the pyruvate is formed at the N-terminus of the alpha chain, which is derived from the carboxyl end of the proenzyme. The post-translation cleavage follows an unusual pathway, termed non-hydrolytic serinolysis, in which the side chain hydroxyl group of the serine supplies its oxygen atom to form the C-terminus of the beta chain, while the remainder of the serine residue undergoes an oxidative deamination to produce ammonia and the pyruvoyl group blocking the N-terminus of the alpha chain.

The enzyme catalyses S-adenosyl-L-methionine + H(+) = S-adenosyl 3-(methylsulfanyl)propylamine + CO2. It participates in amine and polyamine biosynthesis; S-adenosylmethioninamine biosynthesis; S-adenosylmethioninamine from S-adenosyl-L-methionine: step 1/1. Catalyzes the decarboxylation of S-adenosylmethionine to S-adenosylmethioninamine (dcAdoMet), the propylamine donor required for the synthesis of the polyamines spermine and spermidine from the diamine putrescine. The chain is S-adenosylmethionine decarboxylase proenzyme from Caldanaerobacter subterraneus subsp. tengcongensis (strain DSM 15242 / JCM 11007 / NBRC 100824 / MB4) (Thermoanaerobacter tengcongensis).